Here is a 180-residue protein sequence, read N- to C-terminus: Nucleoside-triphosphatase THEP1 (180 aa).

ATP contacts are provided by residues 9 to 16 and 104 to 111; these read GPAGVGKT and LIVIDEIG.

Belongs to the THEP1 NTPase family.

The catalysed reaction is a ribonucleoside 5'-triphosphate + H2O = a ribonucleoside 5'-diphosphate + phosphate + H(+). Its function is as follows. Has nucleotide phosphatase activity towards ATP, GTP, CTP, TTP and UTP. May hydrolyze nucleoside diphosphates with lower efficiency. In Thermococcus kodakarensis (strain ATCC BAA-918 / JCM 12380 / KOD1) (Pyrococcus kodakaraensis (strain KOD1)), this protein is Nucleoside-triphosphatase THEP1.